The sequence spans 140 residues: MSHKAWQNAHAMYENDACAKALGIDIISMDEGFAVVTMTVTAQMLNGHQSCHGGQLFSLADTAFAYACNSQGLAAVASACTIDFLRPGFAGDTLTATAQVRHQGKQTGVYDIEIVNQQQKTVALFRGKSHRIGGTITGEA.

As to quaternary structure, homotetramer.

It participates in aromatic compound metabolism; phenylacetate degradation. Thioesterase with a preference for ring-hydroxylated phenylacetyl-CoA esters. Hydrolyzes 3,4-dihydroxyphenylacetyl-CoA, 3-hydroxyphenylacetyl-CoA and 4-hydroxyphenylacetyl-CoA. Inactive towards 4-hydroxybenzoyl-CoA and 4-hydroxyphenacyl-CoA. This chain is Acyl-coenzyme A thioesterase PaaI (paaI), found in Escherichia coli (strain K12).